The chain runs to 180 residues: Shikimate kinase (180 aa).

Residue 19–24 participates in ATP binding; it reads GAGKTT. A Mg(2+)-binding site is contributed by Thr23. Positions 41, 65, and 87 each coordinate substrate. Residue Arg125 participates in ATP binding. Arg144 is a binding site for substrate.

This sequence belongs to the shikimate kinase family. Monomer. Mg(2+) is required as a cofactor.

It localises to the cytoplasm. The catalysed reaction is shikimate + ATP = 3-phosphoshikimate + ADP + H(+). Its pathway is metabolic intermediate biosynthesis; chorismate biosynthesis; chorismate from D-erythrose 4-phosphate and phosphoenolpyruvate: step 5/7. In terms of biological role, catalyzes the specific phosphorylation of the 3-hydroxyl group of shikimic acid using ATP as a cosubstrate. This chain is Shikimate kinase, found in Acinetobacter baumannii (strain SDF).